The primary structure comprises 414 residues: Tryptophan synthase beta chain (414 aa).

The segment covering 1 to 12 (MVSTISRHDQNK) has biased composition (basic and acidic residues). The interval 1-23 (MVSTISRHDQNKNNDYLNQPSKE) is disordered. N6-(pyridoxal phosphate)lysine is present on K109.

Belongs to the TrpB family. Tetramer of two alpha and two beta chains. Pyridoxal 5'-phosphate serves as cofactor.

The enzyme catalyses (1S,2R)-1-C-(indol-3-yl)glycerol 3-phosphate + L-serine = D-glyceraldehyde 3-phosphate + L-tryptophan + H2O. The protein operates within amino-acid biosynthesis; L-tryptophan biosynthesis; L-tryptophan from chorismate: step 5/5. In terms of biological role, the beta subunit is responsible for the synthesis of L-tryptophan from indole and L-serine. This Prochlorococcus marinus (strain MIT 9515) protein is Tryptophan synthase beta chain.